The primary structure comprises 83 residues: Consomatin Rs1 (83 aa).

Residues 1–22 (MQTAYWVMVMMMVWITAPLSEG) form the signal peptide. Residues 23-55 (GKLNNVIRGLVPDDVTPKRISQSLISRRRFDSR) constitute a propeptide that is removed on maturation. Cys-62 and Cys-67 are disulfide-bonded. Trp-64 bears the D-tryptophan mark. Pro-68 is modified (4-hydroxyproline). The propeptide occupies 71 to 83 (LHGDNYDLKEKDK).

This sequence belongs to the conotoxin C superfamily. Consomatin family. As to expression, expressed by the venom duct.

The protein localises to the secreted. Its function is as follows. Moderately activates human somatostatin receptors (SSTR) with a preferential activation of SSTR1 and SSTR4. In vivo, does not cause behavioral changes in mice within a few minutes of intracranial injection, but causes a progressive loss of movement thereafter. Four to five hours after injection, mice recover, even with the highest dose tested. Shows antinociception and antihyperalgesia activities in two mouse models of acute pain, most probably by acting outside the central nervous system. This Conus raulsilvai (Sea snail) protein is Consomatin Rs1.